The chain runs to 607 residues: tRNA uridine 5-carboxymethylaminomethyl modification enzyme MnmG (607 aa).

Residues 11–16 (GGGHAG), Val-123, and Ser-178 contribute to the FAD site. Residue 270–284 (GPRYCPSVEDKIVRF) participates in NAD(+) binding. Residue Gln-367 participates in FAD binding.

This sequence belongs to the MnmG family. Homodimer. Heterotetramer of two MnmE and two MnmG subunits. The cofactor is FAD.

Its subcellular location is the cytoplasm. Functionally, NAD-binding protein involved in the addition of a carboxymethylaminomethyl (cmnm) group at the wobble position (U34) of certain tRNAs, forming tRNA-cmnm(5)s(2)U34. The sequence is that of tRNA uridine 5-carboxymethylaminomethyl modification enzyme MnmG from Metamycoplasma arthritidis (strain 158L3-1) (Mycoplasma arthritidis).